Consider the following 239-residue polypeptide: Ribosomal RNA small subunit methyltransferase G (239 aa).

Residues Gly78, Phe83, 129–130 (AE), and Arg148 each bind S-adenosyl-L-methionine.

The protein belongs to the methyltransferase superfamily. RNA methyltransferase RsmG family.

It is found in the cytoplasm. Its function is as follows. Specifically methylates the N7 position of a guanine in 16S rRNA. The sequence is that of Ribosomal RNA small subunit methyltransferase G from Desulfitobacterium hafniense (strain Y51).